The primary structure comprises 1167 residues: MKWLFHTLLCMASLKPQGAFNLDVDWAWVTALQPGAPAVLSSLLHQDPSNNQTCLLVARRSSNRNTAALYRCAISISPDEIACQPVEHICMPKGRYQGVTLVGNHNGVLVCIQVQARKFRSLNSELTGACSLLTPNLDLQAQAYFSDLEGFLDPGAHVDSGDYCRSKGGSTGEEKKSARRRRTVEEEDEEEDGTEIAIVLDGSGSIEPSDFQKAKNFISTMMRNFYEKCFECNFALVQYGAVIQTEFDLQESRDINASLAKVQSIVQVKEVTKTASAMQHVLDNIFIPSRGSRKKALKVMVVLTDGDIFGDPLNLTTVINSPKMQGVVRFAIGVGDAFKNNNTYRELKLIASDPKEAHTFKVTNYSALDGLLSKLQQHIVHMEGTVGDALQYQLAQTGFSAQILDKGQVLLGTVGAFNWSGGALLYSTQNGRGCFLNQTAKEDSRTVQYSYLGYSLAVLHKAHGVSYVAGAPRHKLRGAVFELRKEDREEDAFVRRIEGEQMGSYFGSVLCPVDIDMDGTTDFLLVAAPFYHIRGEEGRVYVYQVPEQDASFSLAHTLSGHPGLTNSRFGFAMAAVGDINQDKFTDVAIGAPLEGFGAGDGASYGSVYIYNGHSGGLYDSPSQQIRASSVASGLHYFGMSVSGGLDFNGDGLADITVGSRDSAVVLRSRPVVDLTVSMTFTPDALPMVFIGKMDVKLCFEVDSSGVASEPGLREMFLNFTVDVDVTKQRQRLQCEDSSGCQSCLRKWNGGSFLCEHFWLISTEELCEEDCFSNITIKVTYEFQTSGGRRDYPNPTLDHYKEPSAIFQLPYEKDCKNKVFCIAEIQLTTNISQQELVVGVTKEVTMNISLTNSGEDSYMTNMALNYPRNLQFKKIQKPVSPDVQCDDPKPVASVLVMNCKIGHPILKRSSVNVSVTWQLEESVFPNRTADITVTISNSNEKSLARETRSLQFRHAFIAVLSRPSVMYMNTSQSPSDHKEFFFNVHGENLFGAVFQLQICVPIKLQDFQIVRVKNLTKTQDHTECTQSQEPACGSDPVQHVKEWHSVVCAITSNKENVTVAAEISVGHTKQLLRDVSELPILGEISFNKSLYEGLNAENHRTKITVIFLKEEETRSLPLIIGSSIGGLLVLVVIIAILFKCGFFKRKYQQLNLESTRRAQLKADSLLQD.

Residues 1–19 form the signal peptide; sequence MKWLFHTLLCMASLKPQGA. The Extracellular portion of the chain corresponds to 20-1114; the sequence is FNLDVDWAWV…IFLKEEETRS (1095 aa). FG-GAP repeat units lie at residues 27-81 and 84-142; these read AWVT…PDEI and QPVE…LQAQ. N-linked (GlcNAc...) asparagine glycosylation occurs at N51. 2 cysteine pairs are disulfide-bonded: C72-C83 and C130-C164. Residues 149–192 are X-domain (extra domain); the sequence is EGFLDPGAHVDSGDYCRSKGGSTGEEKKSARRRRTVEEEDEEED. Residues 163–191 are disordered; that stretch reads YCRSKGGSTGEEKKSARRRRTVEEEDEEE. The VWFA domain occupies 193–382; the sequence is GTEIAIVLDG…SKLQQHIVHM (190 aa). N-linked (GlcNAc...) asparagine glycosylation is found at N256, N314, N341, N364, N418, and N437. Residues 383-435 form an FG-GAP 3 repeat; the sequence is EGTVGDALQYQLAQTGFSAQILDKGQVLLGTVGAFNWSGGALLYSTQNGRGCF. FG-GAP repeat units lie at residues 438 to 491, 492 to 552, 555 to 619, and 623 to 683; these read QTAK…REED, AFVR…DASF, AHTL…GLYD, and QQIR…FTPD. Ca(2+) is bound by residues D514, D516, D518, D522, D578, N580, D582, D586, D646, N648, D650, and D654. A disulfide bond links C698 and C754. Residues N718 and N773 are each glycosylated (N-linked (GlcNAc...) asparagine). C814 and C820 are joined by a disulfide. Residues N829 and N846 are each glycosylated (N-linked (GlcNAc...) asparagine). A disulfide bridge links C884 with C898. N-linked (GlcNAc...) asparagine glycans are attached at residues N911, N925, N968, and N1013. Intrachain disulfides connect C998/C1023 and C1031/C1047. N-linked (GlcNAc...) asparagine glycosylation is found at N1055 and N1086. The chain crosses the membrane as a helical span at residues 1115-1137; the sequence is LPLIIGSSIGGLLVLVVIIAILF. The Cytoplasmic segment spans residues 1138 to 1167; it reads KCGFFKRKYQQLNLESTRRAQLKADSLLQD. The short motif at 1140–1144 is the GFFKR motif element; that stretch reads GFFKR.

It belongs to the integrin alpha chain family. Heterodimer of an alpha and a beta subunit. The alpha subunit is composed of a heavy and a light chains linked by a disulfide bond. Alpha-E associates with beta-7.

The protein localises to the membrane. Functionally, integrin alpha-E/beta-7 is a receptor for E-cadherin. It mediates adhesion of intra-epithelial T-lymphocytes to epithelial cell monolayers. Mice expressing a null mutation of the alpha-E subunit gene exhibit a marked reduction in the numbers of intraepithelial lymphocytes in the gut and in the development of gut-associated lymphoid aggregates, supporting a specific role for this integrin in mediating retention of lymphocytes in the intestinal wall. The sequence is that of Integrin alpha-E (Itgae) from Mus musculus (Mouse).